The chain runs to 105 residues: MEHVNEILATVGRILHETTTANTNVANKSTERLGAYIGAGITMVGGATVGLGQGYIFGKAVEAVARNPEVEKQVFKLIFIGSAISESSSIYSLLIAFILIFVSGA.

The next 2 helical transmembrane spans lie at 37 to 57 and 82 to 102; these read IGAGITMVGGATVGLGQGYIF and SAISESSSIYSLLIAFILIFV.

This sequence belongs to the ATPase C chain family. In terms of assembly, F-type ATPases have 2 components, F(1) - the catalytic core - and F(0) - the membrane proton channel. F(1) has five subunits: alpha(3), beta(3), gamma(1), delta(1), epsilon(1). F(0) has three main subunits: a(1), b(2) and c(10-14). The alpha and beta chains form an alternating ring which encloses part of the gamma chain. F(1) is attached to F(0) by a central stalk formed by the gamma and epsilon chains, while a peripheral stalk is formed by the delta and b chains.

Its subcellular location is the cell membrane. In terms of biological role, f(1)F(0) ATP synthase produces ATP from ADP in the presence of a proton or sodium gradient. F-type ATPases consist of two structural domains, F(1) containing the extramembraneous catalytic core and F(0) containing the membrane proton channel, linked together by a central stalk and a peripheral stalk. During catalysis, ATP synthesis in the catalytic domain of F(1) is coupled via a rotary mechanism of the central stalk subunits to proton translocation. Functionally, key component of the F(0) channel; it plays a direct role in translocation across the membrane. A homomeric c-ring of between 10-14 subunits forms the central stalk rotor element with the F(1) delta and epsilon subunits. The chain is ATP synthase subunit c from Mycoplasma pneumoniae (strain ATCC 29342 / M129 / Subtype 1) (Mycoplasmoides pneumoniae).